A 510-amino-acid chain; its full sequence is Light-independent protochlorophyllide reductase subunit B (510 aa).

Aspartate 36 is a [4Fe-4S] cluster binding site. Aspartate 296 acts as the Proton donor in catalysis. Residue 431–432 coordinates substrate; the sequence is GM.

This sequence belongs to the ChlB/BchB/BchZ family. As to quaternary structure, protochlorophyllide reductase is composed of three subunits; ChlL, ChlN and ChlB. Forms a heterotetramer of two ChlB and two ChlN subunits. The cofactor is [4Fe-4S] cluster.

The protein resides in the plastid. Its subcellular location is the chloroplast. The catalysed reaction is chlorophyllide a + oxidized 2[4Fe-4S]-[ferredoxin] + 2 ADP + 2 phosphate = protochlorophyllide a + reduced 2[4Fe-4S]-[ferredoxin] + 2 ATP + 2 H2O. The protein operates within porphyrin-containing compound metabolism; chlorophyll biosynthesis (light-independent). Component of the dark-operative protochlorophyllide reductase (DPOR) that uses Mg-ATP and reduced ferredoxin to reduce ring D of protochlorophyllide (Pchlide) to form chlorophyllide a (Chlide). This reaction is light-independent. The NB-protein (ChlN-ChlB) is the catalytic component of the complex. The sequence is that of Light-independent protochlorophyllide reductase subunit B from Physcomitrium patens (Spreading-leaved earth moss).